Reading from the N-terminus, the 389-residue chain is Stilbene synthase 1 (389 aa).

Position 55-58 (55-58 (KFQR)) interacts with substrate. Cysteine 164 is a catalytic residue. Residues leucine 267 and 305–307 (GGR) each bind substrate.

It belongs to the thiolase-like superfamily. Chalcone/stilbene synthases family. As to quaternary structure, homodimer.

The protein localises to the cytoplasm. It catalyses the reaction 4-coumaroyl-CoA + 3 malonyl-CoA + 3 H(+) = trans-resveratrol + 4 CO2 + 4 CoA. It functions in the pathway phytoalexin biosynthesis; 3,4',5-trihydroxystilbene biosynthesis; 3,4',5-trihydroxystilbene from trans-4-coumarate: step 2/2. This is Stilbene synthase 1 from Arachis hypogaea (Peanut).